The primary structure comprises 463 residues: Glycine--tRNA ligase (463 aa).

Substrate contacts are provided by R100 and E175. ATP-binding positions include 207-209 (RNE), 217-222 (FRTREF), 291-292 (EL), and 335-338 (GADR). Residue 222-226 (FEQME) coordinates substrate. 331 to 335 (EPSVG) lines the substrate pocket.

Belongs to the class-II aminoacyl-tRNA synthetase family. Homodimer.

It localises to the cytoplasm. It carries out the reaction tRNA(Gly) + glycine + ATP = glycyl-tRNA(Gly) + AMP + diphosphate. In terms of biological role, catalyzes the attachment of glycine to tRNA(Gly). This chain is Glycine--tRNA ligase, found in Clostridium kluyveri (strain NBRC 12016).